Consider the following 142-residue polypeptide: Large ribosomal subunit protein uL13 (142 aa).

The protein belongs to the universal ribosomal protein uL13 family. As to quaternary structure, part of the 50S ribosomal subunit.

This protein is one of the early assembly proteins of the 50S ribosomal subunit, although it is not seen to bind rRNA by itself. It is important during the early stages of 50S assembly. This is Large ribosomal subunit protein uL13 from Shewanella oneidensis (strain ATCC 700550 / JCM 31522 / CIP 106686 / LMG 19005 / NCIMB 14063 / MR-1).